A 430-amino-acid polypeptide reads, in one-letter code: MSSVVVVGTQWGDEGKGKITDFLSENAEAIARYQGGNNAGHTIKFDGVTYKLHLIPSGIFYKEKISVIGNGMVVDPKALVEELKYLHDKGVDTSNLRISNRAHIILPYHIRIDEADEERKGANKIGTTKKGIGPAYMDKAARVGIRIIDLLDKETFKEKLEHNLGEKNRLLERFYELEGFKLEDILDEYYEYGQQFKDYVCDTSVVLNDALDDGKRVLFEGAQGVMLDIDQGTYPFVTSSNPIAGGVTIGSGVGPSKINHVVGVAKAYTTRVGDGPFPTELFDSIGDTIREVGHEYGTTTGRPRRVGWFDSVVVRHARRVSGLTDLSLTLLDVLTGIETLKICVAYKLDGKTITEFPASLKDLARCEPVYEELPGWTEDITEVQSLDDLPVNCRHYMERIAQLTGVQVSMFSVGPDRAQTHVVKSVWRLA.

Residues 12 to 18 and 40 to 42 each bind GTP; these read GDEGKGK and GHT. Aspartate 13 acts as the Proton acceptor in catalysis. Mg(2+) contacts are provided by aspartate 13 and glycine 40. Residues 13–16, 38–41, threonine 128, arginine 142, glutamine 223, threonine 238, and arginine 302 each bind IMP; these read DEGK and NAGH. The active-site Proton donor is histidine 41. 298 to 304 is a substrate binding site; that stretch reads TTTGRPR. GTP contacts are provided by residues arginine 304, 330–332, and 412–414; these read LLD and SVG.

It belongs to the adenylosuccinate synthetase family. In terms of assembly, homodimer. Mg(2+) is required as a cofactor.

It localises to the cytoplasm. It catalyses the reaction IMP + L-aspartate + GTP = N(6)-(1,2-dicarboxyethyl)-AMP + GDP + phosphate + 2 H(+). It functions in the pathway purine metabolism; AMP biosynthesis via de novo pathway; AMP from IMP: step 1/2. In terms of biological role, plays an important role in the de novo pathway of purine nucleotide biosynthesis. Catalyzes the first committed step in the biosynthesis of AMP from IMP. The chain is Adenylosuccinate synthetase from Listeria innocua serovar 6a (strain ATCC BAA-680 / CLIP 11262).